The primary structure comprises 128 residues: Aspartate 1-decarboxylase (128 aa).

Residue serine 25 is the Schiff-base intermediate with substrate; via pyruvic acid of the active site. Position 25 is a pyruvic acid (Ser) (serine 25). A substrate-binding site is contributed by threonine 57. The active-site Proton donor is the tyrosine 58. 73 to 75 (GSA) is a binding site for substrate.

This sequence belongs to the PanD family. In terms of assembly, heterooctamer of four alpha and four beta subunits. It depends on pyruvate as a cofactor. Is synthesized initially as an inactive proenzyme, which is activated by self-cleavage at a specific serine bond to produce a beta-subunit with a hydroxyl group at its C-terminus and an alpha-subunit with a pyruvoyl group at its N-terminus.

It is found in the cytoplasm. The enzyme catalyses L-aspartate + H(+) = beta-alanine + CO2. It functions in the pathway cofactor biosynthesis; (R)-pantothenate biosynthesis; beta-alanine from L-aspartate: step 1/1. Its function is as follows. Catalyzes the pyruvoyl-dependent decarboxylation of aspartate to produce beta-alanine. The polypeptide is Aspartate 1-decarboxylase (Burkholderia vietnamiensis (strain G4 / LMG 22486) (Burkholderia cepacia (strain R1808))).